The primary structure comprises 2457 residues: Large tegument protein deneddylase (2457 aa).

Residues 1 to 234 (MALPASLAGF…SDLHGSKIIL (234 aa)) form a deubiquitination activity region. Residues 13–224 (EGTASTNQAD…IMSHYKVISF (212 aa)) enclose the Peptidase C76 domain. Active-site residues include Cys-33, Asp-163, and His-165. 4 disordered regions span residues 281-350 (EEWT…LPSV), 2064-2131 (ITEG…PIIP), 2164-2360 (GHSG…PQPQ), and 2387-2407 (GMSD…GVTH). Over residues 293-302 (SGRTPPEKMT) the composition is skewed to basic and acidic residues. Over residues 314 to 334 (TMDDDVIDLTGDDDMEDESEG) the composition is skewed to acidic residues. Basic and acidic residues predominate over residues 2080-2091 (TQDHMEEPDNKQ). Residues 2115–2131 (SPSPSPPVLTPIKPIIP) are compositionally biased toward pro residues. The segment covering 2173–2186 (HIQSSTPGPAQNTR) has biased composition (polar residues). Positions 2387-2398 (GMSDDKNPEPCV) are enriched in basic and acidic residues.

It belongs to the herpesviridae large tegument protein family. Interacts with host CUL1 and CUL4A; these interactions inhibit the E3 ligase activity of cullins. Interacts with inner tegument protein. Interacts with capsid vertex specific component CVC2. Interacts with the major capsid protein/MCP.

The protein resides in the virion tegument. Its subcellular location is the host cytoplasm. It localises to the host nucleus. It carries out the reaction Thiol-dependent hydrolysis of ester, thioester, amide, peptide and isopeptide bonds formed by the C-terminal Gly of ubiquitin (a 76-residue protein attached to proteins as an intracellular targeting signal).. In terms of biological role, large tegument protein that plays multiple roles in the viral cycle. During viral entry, remains associated with the capsid while most of the tegument is detached and participates in the capsid transport toward the host nucleus. Plays a role in the routing of the capsid at the nuclear pore complex and subsequent uncoating. Within the host nucleus, acts as a deneddylase and promotes the degradation of nuclear CRLs (cullin-RING ubiquitin ligases) and thereby stabilizes nuclear CRL substrates, while cytoplasmic CRLs remain unaffected. These modifications prevent host cell cycle S-phase progression and create a favorable environment allowing efficient viral genome replication. Participates later in the secondary envelopment of capsids. Indeed, plays a linker role for the association of the outer viral tegument to the capsids together with the inner tegument protein. This is Large tegument protein deneddylase from Apodemus sylvaticus (European woodmouse).